Reading from the N-terminus, the 287-residue chain is tRNA-cytidine(32) 2-sulfurtransferase (287 aa).

The PP-loop motif motif lies at 39-44 (SGGKDS). [4Fe-4S] cluster contacts are provided by Cys-114, Cys-117, and Cys-205.

This sequence belongs to the TtcA family. In terms of assembly, homodimer. Mg(2+) serves as cofactor. Requires [4Fe-4S] cluster as cofactor.

Its subcellular location is the cytoplasm. It carries out the reaction cytidine(32) in tRNA + S-sulfanyl-L-cysteinyl-[cysteine desulfurase] + AH2 + ATP = 2-thiocytidine(32) in tRNA + L-cysteinyl-[cysteine desulfurase] + A + AMP + diphosphate + H(+). The protein operates within tRNA modification. Functionally, catalyzes the ATP-dependent 2-thiolation of cytidine in position 32 of tRNA, to form 2-thiocytidine (s(2)C32). The sulfur atoms are provided by the cysteine/cysteine desulfurase (IscS) system. The chain is tRNA-cytidine(32) 2-sulfurtransferase from Dechloromonas aromatica (strain RCB).